A 452-amino-acid polypeptide reads, in one-letter code: uncharacterized protein (452 aa).

One can recognise a TRAM domain in the interval 3–61; it reads KVKIGEKYEVDITSMGHEGEGVGRIDGIAVFVKGALKGERVIVEIEEVHKNYLKGYTVK. 4 residues coordinate [4Fe-4S] cluster: Cys74, Cys80, Cys83, and Cys160. 4 residues coordinate S-adenosyl-L-methionine: Gln284, Tyr313, Glu334, and Asp382. The active-site Nucleophile is the Cys409.

Belongs to the class I-like SAM-binding methyltransferase superfamily. RNA M5U methyltransferase family.

This is an uncharacterized protein from Caldanaerobacter subterraneus subsp. tengcongensis (strain DSM 15242 / JCM 11007 / NBRC 100824 / MB4) (Thermoanaerobacter tengcongensis).